The following is a 98-amino-acid chain: Alpha-elicitin capsicein (98 aa).

Cystine bridges form between C3–C71, C27–C56, and C51–C95.

Belongs to the elicitin family.

Its subcellular location is the secreted. In terms of biological role, induces local and distal defense responses (incompatible hypersensitive reaction) in plants from the solanaceae and cruciferae families. Elicits leaf necrosis and causes the accumulation of pathogenesis-related proteins. Might interact with the lipidic molecules of the plasma membrane. The sequence is that of Alpha-elicitin capsicein from Phytophthora capsici.